A 505-amino-acid chain; its full sequence is Peroxisome proliferator-activated receptor gamma (505 aa).

Threonine 84 is a glycosylation site (O-linked (GlcNAc) threonine). Position 112 is a phosphoserine; by MAPK (serine 112). Positions alanine 136 to phenylalanine 210 form a DNA-binding region, nuclear receptor. NR C4-type zinc fingers lie at residues cysteine 139 to cysteine 159 and cysteine 176 to cysteine 198. Residues histidine 205–methionine 280 form an interaction with FAM120B region. The 266-residue stretch at aspartate 238–aspartate 503 folds into the NR LBD domain. A Glycyl lysine isopeptide (Lys-Gly) (interchain with G-Cter in ubiquitin) cross-link involves residue lysine 252. Residues proline 495–aspartate 503 carry the 9aaTAD motif.

The protein belongs to the nuclear hormone receptor family. NR1 subfamily. As to quaternary structure, interacts with FOXO1 (acetylated form). Heterodimer with other nuclear receptors, such as RXRA. The heterodimer with the retinoic acid receptor RXRA is called adipocyte-specific transcription factor ARF6. Interacts with NCOA6 coactivator, leading to a strong increase in transcription of target genes. Interacts with coactivator PPARBP, leading to a mild increase in transcription of target genes. Interacts with NOCA7 in a ligand-inducible manner. Interacts with NCOA1 and NCOA2 LXXLL motifs. Interacts with ASXL1, ASXL2, DNTTIP2, FAM120B, MAP2K1/MEK1, NR0B2, PDPK1, PRDM16, PRMT2 and TGFB1I1. Interacts (when activated by agonist) with PPP5C. Interacts with HELZ2 and THRAP3; the interaction stimulates the transcriptional activity of PPARG. Interacts with PER2, the interaction is ligand dependent and blocks PPARG recruitment to target promoters. Interacts with NOCT. Interacts with ACTN4. Interacts (when in the liganded conformation) with GPS2. Interacts with CRY1 and CRY2 in a ligand-dependent manner. In the absence of hormonal ligand, interacts with TACC1. In macrophages, interacts with PAQR3 and STUB1; the interactions promote PPARG poylubiquitination and STUB1-mediated degradation. O-GlcNAcylation at Thr-84 reduces transcriptional activity in adipocytes. In terms of processing, phosphorylated at basal conditions and dephosphorylated when treated with the ligand. May be dephosphorylated by PPP5C. The phosphorylated form may be inactive and dephosphorylation induces adipogenic activity. Post-translationally, ubiquitinated by E3 ubiquitin-protein ligase complex containing FBXO9; leading to proteasomal degradation. Ubiquitinated at Lys-252 by TRIM55 leading to proteasomal degradation. Ubiquitinated by E3 ubiquitin-protein ligase STUB1/CHIP; leading to proteasomal degradation. Highest expression in adipose tissue. Lower in liver, heart, kidney, stomach, duodenum and colon.

It localises to the nucleus. It is found in the cytoplasm. With respect to regulation, PDPK1 activates its transcriptional activity independently of its kinase activity. Its function is as follows. Nuclear receptor that binds peroxisome proliferators such as hypolipidemic drugs and fatty acids. Once activated by a ligand, the nuclear receptor binds to DNA specific PPAR response elements (PPRE) and modulates the transcription of its target genes, such as acyl-CoA oxidase. It therefore controls the peroxisomal beta-oxidation pathway of fatty acids. Key regulator of adipocyte differentiation and glucose homeostasis. ARF6 acts as a key regulator of the tissue-specific adipocyte P2 (aP2) enhancer. Acts as a critical regulator of gut homeostasis by suppressing NF-kappa-B-mediated pro-inflammatory responses. Plays a role in the regulation of cardiovascular circadian rhythms by regulating the transcription of BMAL1 in the blood vessels. The protein is Peroxisome proliferator-activated receptor gamma (PPARG) of Macaca mulatta (Rhesus macaque).